A 674-amino-acid polypeptide reads, in one-letter code: Probable copper-transporting P-type ATPase B (674 aa).

The disordered stretch occupies residues 1 to 22 (MNHSNQMHHDNHASHDHHSGHA). The span at 7-19 (MHHDNHASHDHHS) shows a compositional bias: basic and acidic residues. The next 6 membrane-spanning stretches (helical) occupy residues 32–52 (FFVSLIFAIPIILLSPLMGVN), 57–77 (FTFPGSEWVVLILSTILFFYG), 95–115 (GMMTLVALGISVAYIYSLYAF), 127–147 (TMDFFWELATLILIMLLGHWI), 284–304 (GYLFYFAVSVGVISFIVWMLI), and 315–335 (LVTVLVIACPHALGLAIPLVT). Residue Asp367 is the 4-aspartylphosphate intermediate of the active site. The Mg(2+) site is built by Asp565 and Asp569. Transmembrane regions (helical) follow at residues 623-645 (LWWGAGYNIVAVPLAAGILAFIG) and 649-671 (SPAIGAILMSLSTIIVAINAFTL).

This sequence belongs to the cation transport ATPase (P-type) (TC 3.A.3) family. Type IB subfamily.

It localises to the cell membrane. It catalyses the reaction Cu(+)(in) + ATP + H2O = Cu(+)(out) + ADP + phosphate + H(+). Functionally, involved in copper transport. The chain is Probable copper-transporting P-type ATPase B (copB) from Staphylococcus aureus (strain USA300 / TCH1516).